Here is an 82-residue protein sequence, read N- to C-terminus: ATP synthase subunit c, chloroplastic (82 aa).

Helical transmembrane passes span 7–27 and 57–77; these read AASVIAAGLAVGLAAIGPGIG and LAFMESLTIYGLVVALSLLFA.

This sequence belongs to the ATPase C chain family. As to quaternary structure, F-type ATPases have 2 components, F(1) - the catalytic core - and F(0) - the membrane proton channel. F(1) has five subunits: alpha(3), beta(3), gamma(1), delta(1), epsilon(1). F(0) has four main subunits: a(1), b(1), b'(1) and c(10-14). The alpha and beta chains form an alternating ring which encloses part of the gamma chain. F(1) is attached to F(0) by a central stalk formed by the gamma and epsilon chains, while a peripheral stalk is formed by the delta, b and b' chains.

The protein localises to the plastid. Its subcellular location is the chloroplast thylakoid membrane. F(1)F(0) ATP synthase produces ATP from ADP in the presence of a proton or sodium gradient. F-type ATPases consist of two structural domains, F(1) containing the extramembraneous catalytic core and F(0) containing the membrane proton channel, linked together by a central stalk and a peripheral stalk. During catalysis, ATP synthesis in the catalytic domain of F(1) is coupled via a rotary mechanism of the central stalk subunits to proton translocation. In terms of biological role, key component of the F(0) channel; it plays a direct role in translocation across the membrane. A homomeric c-ring of between 10-14 subunits forms the central stalk rotor element with the F(1) delta and epsilon subunits. This is ATP synthase subunit c, chloroplastic from Porphyra purpurea (Red seaweed).